Here is a 297-residue protein sequence, read N- to C-terminus: Homoserine kinase (297 aa).

82–92 lines the ATP pocket; it reads PVSRGLGSSAA.

Belongs to the GHMP kinase family. Homoserine kinase subfamily.

It localises to the cytoplasm. The enzyme catalyses L-homoserine + ATP = O-phospho-L-homoserine + ADP + H(+). The protein operates within amino-acid biosynthesis; L-threonine biosynthesis; L-threonine from L-aspartate: step 4/5. Catalyzes the ATP-dependent phosphorylation of L-homoserine to L-homoserine phosphate. This is Homoserine kinase from Clostridium botulinum (strain Kyoto / Type A2).